The sequence spans 305 residues: Probable lipid kinase YegS-like (305 aa).

Residues 1–129 form the DAGKc domain; it reads MSERKALLIL…IDLGEVGGQI (129 aa). Residues T39, 65–71, and T92 contribute to the ATP site; that span reads GDGTLRD. 3 residues coordinate Mg(2+): L210, D213, and L215. E268 serves as the catalytic Proton acceptor.

The protein belongs to the diacylglycerol/lipid kinase family. YegS lipid kinase subfamily. Requires Mg(2+) as cofactor. Ca(2+) is required as a cofactor.

It is found in the cytoplasm. Probably phosphorylates lipids; the in vivo substrate is unknown. The protein is Probable lipid kinase YegS-like of Pseudomonas fluorescens (strain Pf0-1).